The primary structure comprises 318 residues: COP9 signalosome complex subunit 6 (318 aa).

Residues 32–165 (VALHPLVILN…VSVYESVIDI (134 aa)) form the MPN domain.

The protein belongs to the peptidase M67A family. CSN6 subfamily. As to quaternary structure, component of the CSN complex, probably composed of cops1, cops2, cops3, cops4, cops5, cops6, cops7, cops8 and cops9.

Its subcellular location is the cytoplasm. The protein localises to the nucleus. Functionally, component of the COP9 signalosome complex (CSN), a complex involved in various cellular and developmental processes. The CSN complex is an essential regulator of the ubiquitin (Ubl) conjugation pathway by mediating the deneddylation of the cullin subunits of E3 ligase complexes, leading to modify the Ubl ligase activity. The sequence is that of COP9 signalosome complex subunit 6 (cops6) from Xenopus laevis (African clawed frog).